The following is a 512-amino-acid chain: AMP phosphorylase (512 aa).

Residues Gly166, 192–197 (SRAITG), and Thr201 each bind AMP. Asp254 acts as the Proton donor in catalysis. Positions 262 and 286 each coordinate AMP.

Belongs to the thymidine/pyrimidine-nucleoside phosphorylase family. Type 2 subfamily.

The catalysed reaction is AMP + phosphate = alpha-D-ribose 1,5-bisphosphate + adenine. It catalyses the reaction CMP + phosphate = cytosine + alpha-D-ribose 1,5-bisphosphate. It carries out the reaction UMP + phosphate = alpha-D-ribose 1,5-bisphosphate + uracil. Catalyzes the conversion of AMP and phosphate to adenine and ribose 1,5-bisphosphate (R15P). Exhibits phosphorylase activity toward CMP and UMP in addition to AMP. Functions in an archaeal AMP degradation pathway, together with R15P isomerase and RubisCO. This is AMP phosphorylase from Methanothrix thermoacetophila (strain DSM 6194 / JCM 14653 / NBRC 101360 / PT) (Methanosaeta thermophila).